The primary structure comprises 501 residues: Bifunctional purine biosynthesis protein PurH (501 aa).

The 144-residue stretch at 1–144 (MKKRALISVF…KNFQDVVVIS (144 aa)) folds into the MGS-like domain.

Belongs to the PurH family.

It carries out the reaction (6R)-10-formyltetrahydrofolate + 5-amino-1-(5-phospho-beta-D-ribosyl)imidazole-4-carboxamide = 5-formamido-1-(5-phospho-D-ribosyl)imidazole-4-carboxamide + (6S)-5,6,7,8-tetrahydrofolate. It catalyses the reaction IMP + H2O = 5-formamido-1-(5-phospho-D-ribosyl)imidazole-4-carboxamide. The protein operates within purine metabolism; IMP biosynthesis via de novo pathway; 5-formamido-1-(5-phospho-D-ribosyl)imidazole-4-carboxamide from 5-amino-1-(5-phospho-D-ribosyl)imidazole-4-carboxamide (10-formyl THF route): step 1/1. It functions in the pathway purine metabolism; IMP biosynthesis via de novo pathway; IMP from 5-formamido-1-(5-phospho-D-ribosyl)imidazole-4-carboxamide: step 1/1. The chain is Bifunctional purine biosynthesis protein PurH from Clostridium botulinum (strain Eklund 17B / Type B).